Consider the following 910-residue polypeptide: E3 ubiquitin-protein ligase MARCHF6 (910 aa).

M1 is subject to N-acetylmethionine. Residues 1–62 (MDTAEEDICR…ELCKHRFAFT (62 aa)) form an RING-CH-type zinc finger. Topologically, residues 1–91 (MDTAEEDICR…LVTSIGTAIR (91 aa)) are cytoplasmic. Positions 9, 12, 26, 28, 36, 39, 52, and 55 each coordinate Zn(2+). Residues 92–112 (YWFHYTLVAFAWLGVVPLTAC) form a helical membrane-spanning segment. Residues 113–142 (RIYKCLFTGSVSSLLTLPLDMLSTENLLAD) are Extracellular-facing. A helical transmembrane segment spans residues 143–163 (CLQGCFVVTCTLCAFISLVWL). The Cytoplasmic segment spans residues 164 to 283 (REQIVHGGAP…WERMLGLDGS (120 aa)). The disordered stretch occupies residues 185–256 (AAGHHQNEAP…AADANNGAQD (72 aa)). Residues 223-248 (DAQDDQAEEEEEDNEEEDDAGVEDAA) show a composition bias toward acidic residues. Residues 284–304 (LVFLEHVFWVVSLNTLFILVF) traverse the membrane as a helical segment. The Extracellular portion of the chain corresponds to 305–336 (AFCPYHIGHFSLVGLGFEEHVQASHFEGLITT). Residues 337-357 (IVGYILLAITLIICHGLATLV) form a helical membrane-spanning segment. The Cytoplasmic portion of the chain corresponds to 358-376 (KFHRSRRLLGVCYIVVKVS). Residues 377 to 397 (LLVVVEIGVFPLICGWWLDIC) form a helical membrane-spanning segment. At 398 to 421 (SLEMFDATLKDRELSFQSAPGTTM) the chain is on the extracellular side. Residues 422-442 (FLHWLVGMVYVFYFASFILLL) traverse the membrane as a helical segment. Residues 443-480 (REVLRPGVLWFLRNLNDPDFNPVQEMIHLPIYRHLRRF) lie on the Cytoplasmic side of the membrane. Residues 481-501 (ILSVIVFGSIVLLMLWLPIRI) form a helical membrane-spanning segment. Residues 502–519 (IKSVLPNFLPYNVMLYSD) are Extracellular-facing. A helical transmembrane segment spans residues 520-540 (APVSELSLELLLLQVVLPALL). Residues 541-632 (EQRTHEAVAE…YRRPLNFPLR (92 aa)) are Cytoplasmic-facing. The chain crosses the membrane as a helical span at residues 633–653 (IFLLIVFMCITLLIASLICLT). The Extracellular portion of the chain corresponds to 654 to 678 (LPVFAGRWLMSFWTGTAKIHELYTA). The helical transmembrane segment at 679-699 (ACGLYVCWLTIRAVTVMVAWM) threads the bilayer. Topologically, residues 700-721 (PQGRRVVFQKVKEWSLMIMKTL) are cytoplasmic. A helical membrane pass occupies residues 722-742 (IVAVLLAGVVPLLLGLLFELV). At 743 to 764 (IVAPLRVPLDQTPLFYPWQDWA) the chain is on the extracellular side. A helical membrane pass occupies residues 765-785 (LGVLHAKIIAAITLMGPQWWL). Residues 786-815 (KTVIEQVYANGIRNIDLHYIVRKLAAPVIS) lie on the Cytoplasmic side of the membrane. The chain crosses the membrane as a helical span at residues 816 to 836 (VLLLSLCVPYVIASGVVPLLG). Over 837 to 848 (VTAEMQNLVHRR) the chain is Extracellular. Residues 849–869 (IYPFLLMVVVLMAILSFQVRQ) traverse the membrane as a helical segment. Over 870-910 (FKRLYEHIKNDKYLVGQRLVNYERKSGKQGSSPPPPQSSQE) the chain is Cytoplasmic.

The protein belongs to the DOA10/MARCHF6 family. As to quaternary structure, interacts with DIO2. Interacts with SQLE. Auto-ubiquitinated, which results in proteasomal degradation. Deubiquitinated by USP19; protecting MARCHF6 from p97-mediated proteasomal degradation.

It localises to the endoplasmic reticulum membrane. It catalyses the reaction S-ubiquitinyl-[E2 ubiquitin-conjugating enzyme]-L-cysteine + [acceptor protein]-L-lysine = [E2 ubiquitin-conjugating enzyme]-L-cysteine + N(6)-ubiquitinyl-[acceptor protein]-L-lysine.. The protein operates within protein modification; protein ubiquitination. Functionally, endoplasmic reticulum membrane-associated E3 ubiquitin ligase that plays a critical role in mitigating endoplasmic reticulum stress, the regulation of cholesterol and lipid homeostasis, and ferroptosis. Acts as a pivotal component of both the Ac/N-degron pathway (targeting the N-terminal acetyl group of substrates) and the ER-associated protein degradation-cytosol (ERAD-C) pathway (targeting misfolded substrates). For instance, mediates the degradation of Ac/N-degron-bearing proteins such as the G-protein regulator RGS2 and the lipid droplet protein PLIN2. Suppresses endoplasmic reticulum stress and ferroptosis through cytosolic POMC degradation. Prevents ferroptosis by acting as a NADPH sensor during lipid peroxidation through its C-terminal regulatory region. Facilitates also the degradation of selected endoplasmic reticulum proteins by associating with signal peptide peptidase for the turnover of endogenous tail-anchored proteins. Promotes ubiquitination of DIO2, leading to its degradation. By ubiquitinating and thereby modulating the stability of many proteins of the cholesterol pathway including SQLE, CYP51A1, CYP11A1 and HMGCR, acts as a crucial post-translational regulator of cholesterol synthesis. The protein is E3 ubiquitin-protein ligase MARCHF6 (MARCHF6) of Pongo abelii (Sumatran orangutan).